The primary structure comprises 458 residues: Exodeoxyribonuclease 7 large subunit (458 aa).

The protein belongs to the XseA family. As to quaternary structure, heterooligomer composed of large and small subunits.

Its subcellular location is the cytoplasm. The enzyme catalyses Exonucleolytic cleavage in either 5'- to 3'- or 3'- to 5'-direction to yield nucleoside 5'-phosphates.. Functionally, bidirectionally degrades single-stranded DNA into large acid-insoluble oligonucleotides, which are then degraded further into small acid-soluble oligonucleotides. The polypeptide is Exodeoxyribonuclease 7 large subunit (Stutzerimonas stutzeri (strain A1501) (Pseudomonas stutzeri)).